The primary structure comprises 91 residues: Small ribosomal subunit protein uS15 (91 aa).

This sequence belongs to the universal ribosomal protein uS15 family. Part of the 30S ribosomal subunit. Forms a bridge to the 50S subunit in the 70S ribosome, contacting the 23S rRNA.

Its function is as follows. One of the primary rRNA binding proteins, it binds directly to 16S rRNA where it helps nucleate assembly of the platform of the 30S subunit by binding and bridging several RNA helices of the 16S rRNA. In terms of biological role, forms an intersubunit bridge (bridge B4) with the 23S rRNA of the 50S subunit in the ribosome. This Amoebophilus asiaticus (strain 5a2) protein is Small ribosomal subunit protein uS15.